The sequence spans 313 residues: Glyoxylate/hydroxypyruvate reductase A (313 aa).

The active site involves R228. H276 functions as the Proton donor in the catalytic mechanism.

Belongs to the D-isomer specific 2-hydroxyacid dehydrogenase family. GhrA subfamily.

It is found in the cytoplasm. It catalyses the reaction glycolate + NADP(+) = glyoxylate + NADPH + H(+). It carries out the reaction (R)-glycerate + NAD(+) = 3-hydroxypyruvate + NADH + H(+). The enzyme catalyses (R)-glycerate + NADP(+) = 3-hydroxypyruvate + NADPH + H(+). Its function is as follows. Catalyzes the NADPH-dependent reduction of glyoxylate and hydroxypyruvate into glycolate and glycerate, respectively. This Serratia proteamaculans (strain 568) protein is Glyoxylate/hydroxypyruvate reductase A.